The sequence spans 342 residues: Holliday junction branch migration complex subunit RuvB (342 aa).

The tract at residues 1–179 (MTNILSPEKS…FGIPMRLNFY (179 aa)) is large ATPase domain (RuvB-L). Residues Ile18, Arg19, Gly60, Lys63, Thr64, Thr65, 126-128 (EDF), Arg169, Tyr179, and Arg216 each bind ATP. Thr64 is a Mg(2+) binding site. The tract at residues 180 to 250 (NTGELKKVLN…ISDFGLNRLE (71 aa)) is small ATPAse domain (RuvB-S). The segment at 253 to 342 (RIGLDSNDYR…HQFNIFNENE (90 aa)) is head domain (RuvB-H). DNA contacts are provided by Arg289, Arg308, and Arg313.

The protein belongs to the RuvB family. Homohexamer. Forms an RuvA(8)-RuvB(12)-Holliday junction (HJ) complex. HJ DNA is sandwiched between 2 RuvA tetramers; dsDNA enters through RuvA and exits via RuvB. An RuvB hexamer assembles on each DNA strand where it exits the tetramer. Each RuvB hexamer is contacted by two RuvA subunits (via domain III) on 2 adjacent RuvB subunits; this complex drives branch migration. In the full resolvosome a probable DNA-RuvA(4)-RuvB(12)-RuvC(2) complex forms which resolves the HJ.

Its subcellular location is the cytoplasm. It carries out the reaction ATP + H2O = ADP + phosphate + H(+). Functionally, the RuvA-RuvB-RuvC complex processes Holliday junction (HJ) DNA during genetic recombination and DNA repair, while the RuvA-RuvB complex plays an important role in the rescue of blocked DNA replication forks via replication fork reversal (RFR). RuvA specifically binds to HJ cruciform DNA, conferring on it an open structure. The RuvB hexamer acts as an ATP-dependent pump, pulling dsDNA into and through the RuvAB complex. RuvB forms 2 homohexamers on either side of HJ DNA bound by 1 or 2 RuvA tetramers; 4 subunits per hexamer contact DNA at a time. Coordinated motions by a converter formed by DNA-disengaged RuvB subunits stimulates ATP hydrolysis and nucleotide exchange. Immobilization of the converter enables RuvB to convert the ATP-contained energy into a lever motion, pulling 2 nucleotides of DNA out of the RuvA tetramer per ATP hydrolyzed, thus driving DNA branch migration. The RuvB motors rotate together with the DNA substrate, which together with the progressing nucleotide cycle form the mechanistic basis for DNA recombination by continuous HJ branch migration. Branch migration allows RuvC to scan DNA until it finds its consensus sequence, where it cleaves and resolves cruciform DNA. The chain is Holliday junction branch migration complex subunit RuvB from Rickettsia conorii (strain ATCC VR-613 / Malish 7).